The primary structure comprises 312 residues: Retron Ec83 reverse transcriptase (312 aa).

Residues 14 to 239 enclose the Reverse transcriptase domain; the sequence is PDFDVLLKSR…HNRHVTGVTL (226 aa). Positions 97, 185, and 186 each coordinate Mg(2+).

It belongs to the bacterial reverse transcriptase family.

The catalysed reaction is DNA(n) + a 2'-deoxyribonucleoside 5'-triphosphate = DNA(n+1) + diphosphate. In terms of biological role, reverse transcriptase (RT) component of antiviral defense system retron Ec83, composed of a non-coding RNA (ncRNA), this reverse transcriptase (RT), a probable ATPase and a putative HNH endonuclease. Expression of retron Ec83 confers protection against bacteriophages T2, T4 and T6. At multiplicity of infection (MOI) of 0.02 cultures slow growth when infected with T4 but do not collapse, at MOI 2 cultures enter growth stasis. Responsible for synthesis of msDNA-Ec83 (a linear ssDNA with a 5'-terminal phosphate residue). Unlike most known msDNAs the mature product from the original strain does not have an RNA component. When the ncRNA plus RT are expressed in strain K12 / JM109 only linear DNA is seen in stationary phase cells, but logarithmic phase cells have both a linear and branched msDNA (a branched molecule with RNA linked by a 2',5'-phosphodiester bond to ssDNA, a 'classic' retron). The branched msDNA is probably the precursor for the mature linear msDNA, the precursor is cleaved endonucleolytically by ExoVII (xseA-xseB) leaving the observed mature 5'-phosphate ssDNA terminus. The retron transcript serves as primer (from a conserved internal G residue) and template for the reaction, and codes for the RT. Overexpression of the ncRNA and RT, which leads to increased levels of msDNA, is mutagenic in vivo. This may be due to a mismatch in the msDNA stem which binds and sequesters MutS and/or MutL. This chain is Retron Ec83 reverse transcriptase, found in Escherichia coli.